The primary structure comprises 599 residues: Putative sensor histidine kinase NtrY-like (599 aa).

The next 4 helical transmembrane spans lie at 17–37 (VLIF…FYVI), 44–64 (FSTI…LGVL), 85–105 (IVIA…VFSV), and 285–305 (IMFI…GVIF). Positions 307 to 361 (AKIVKPIKKLVTATDKVKDGDLTVQVPENEVDKDEIGTLYAAFNRMIKQLSRQQR) constitute an HAMP domain. Residues 378–589 (KVAHEIKNPL…IIDIKFDLKK (212 aa)) enclose the Histidine kinase domain. H381 carries the phosphohistidine; by autocatalysis modification.

Its subcellular location is the cell membrane. The catalysed reaction is ATP + protein L-histidine = ADP + protein N-phospho-L-histidine.. Functionally, member of the two-component regulatory system RF_0427/RF_0895. This is Putative sensor histidine kinase NtrY-like from Rickettsia felis (strain ATCC VR-1525 / URRWXCal2) (Rickettsia azadi).